Consider the following 311-residue polypeptide: Aspartate carbamoyltransferase catalytic subunit (311 aa).

The carbamoyl phosphate site is built by Arg-55 and Thr-56. Lys-85 is an L-aspartate binding site. Carbamoyl phosphate is bound by residues Arg-106, His-135, and Gln-138. L-aspartate is bound by residues Arg-168 and Arg-230. Carbamoyl phosphate contacts are provided by Leu-268 and Pro-269.

The protein belongs to the aspartate/ornithine carbamoyltransferase superfamily. ATCase family. Heterododecamer (2C3:3R2) of six catalytic PyrB chains organized as two trimers (C3), and six regulatory PyrI chains organized as three dimers (R2).

The catalysed reaction is carbamoyl phosphate + L-aspartate = N-carbamoyl-L-aspartate + phosphate + H(+). The protein operates within pyrimidine metabolism; UMP biosynthesis via de novo pathway; (S)-dihydroorotate from bicarbonate: step 2/3. Catalyzes the condensation of carbamoyl phosphate and aspartate to form carbamoyl aspartate and inorganic phosphate, the committed step in the de novo pyrimidine nucleotide biosynthesis pathway. In Citrobacter koseri (strain ATCC BAA-895 / CDC 4225-83 / SGSC4696), this protein is Aspartate carbamoyltransferase catalytic subunit.